Here is a 348-residue protein sequence, read N- to C-terminus: S-adenosylmethionine-dependent nucleotide dehydratase RSAD2 (348 aa).

Residues 56-276 (SATPSSVNYH…LERHSSISCL (221 aa)) enclose the Radical SAM core domain. [4Fe-4S] cluster is bound by residues C70, C74, and C77.

This sequence belongs to the radical SAM superfamily. RSAD2 family. [4Fe-4S] cluster serves as cofactor. In terms of tissue distribution, expressed at low levels in spleen and head kidney.

The protein resides in the endoplasmic reticulum membrane. Its function is as follows. Interferon-inducible iron-sulfur (4FE-4S) cluster-binding antiviral protein which plays a major role in the cell antiviral state induced by type I and type II interferon. This chain is S-adenosylmethionine-dependent nucleotide dehydratase RSAD2, found in Oncorhynchus mykiss (Rainbow trout).